The following is a 60-amino-acid chain: Metallothionein A (60 aa).

The interval 1–28 (MDPCECSKTGKCNCGTSCTCTNCSCKCC) is beta. A divalent metal cation-binding residues include Cys-4, Cys-6, Cys-12, Cys-14, Cys-18, Cys-20, Cys-23, Cys-25, Cys-28, Cys-32, Cys-33, Cys-35, Cys-36, Cys-40, Cys-43, Cys-47, Cys-49, Cys-54, Cys-58, and Cys-59. The interval 29 to 60 (KKSCCSCCPSGCSKCASGCVCKGNSCDKSCCQ) is alpha.

This sequence belongs to the metallothionein superfamily. Type 1 family.

Metallothioneins have a high content of cysteine residues that bind various heavy metals. This is Metallothionein A (mta) from Cyprinodon sp. (Pupfish).